Here is a 375-residue protein sequence, read N- to C-terminus: Alcohol dehydrogenase 1 (375 aa).

N-acetylserine is present on S2. Zn(2+) is bound by residues C47, H68, C98, C101, C104, C112, and C175. Residues 200-205 (GLGGVG), D224, and K229 contribute to the NAD(+) site. The residue at position 234 (K234) is an N6-succinyllysine. Residue 293-295 (VGV) participates in NAD(+) binding. K340 is subject to N6-succinyllysine. R370 contacts NAD(+).

It belongs to the zinc-containing alcohol dehydrogenase family. Class-I subfamily. Zn(2+) serves as cofactor.

The protein resides in the cytoplasm. It catalyses the reaction a primary alcohol + NAD(+) = an aldehyde + NADH + H(+). The catalysed reaction is a secondary alcohol + NAD(+) = a ketone + NADH + H(+). In Peromyscus maniculatus (North American deer mouse), this protein is Alcohol dehydrogenase 1 (ADH1).